Here is a 628-residue protein sequence, read N- to C-terminus: EIN3-binding F-box protein 1 (628 aa).

One can recognise an F-box domain in the interval 61–109 (PVSIDVLPDECLFEIFRRLSGPQERSACAFVSKQWLTLVSSIRQKEIDV).

In terms of assembly, part of a SCF (SKP1-cullin-F-box) protein ligase complex. Interacts with CUL1, SKP1A/ASK1, SKP1B/ASK2, ASK11, ASK12, ASK13, ASK18, EIN3, and EIL1. As to expression, ubiquitous.

The protein resides in the nucleus. It participates in protein modification; protein ubiquitination. Component of SCF(EBF1) E3 ubiquitin ligase complexes, which may mediate the ubiquitination and subsequent proteasomal degradation of target proteins (probably including EIN3 and EIL1). Regulator of the ethylene signaling cascade by modulating the stability of EIN3 and EIL1 proteins. Confers insensitivity to ethylene. The protein is EIN3-binding F-box protein 1 (EBF1) of Arabidopsis thaliana (Mouse-ear cress).